The chain runs to 190 residues: Small ribosomal subunit protein uS4 (190 aa).

The S4 RNA-binding domain occupies 106-178 (RRLQTVVFKH…GRVKRVKRNA (73 aa)). The segment at 166–190 (GRPGRVKRVKRNAAKKGSGGGDDDE) is disordered. Residues 169–179 (GRVKRVKRNAA) show a composition bias toward basic residues.

Belongs to the universal ribosomal protein uS4 family.

The polypeptide is Small ribosomal subunit protein uS4 (Trypanosoma brucei brucei).